A 640-amino-acid polypeptide reads, in one-letter code: ETV5-related protein Ets96B (640 aa).

The segment at 315–375 is disordered; it reads HADSTTTAAQ…HHGHQQAEQQ (61 aa). Positions 321–356 form a coiled coil; that stretch reads TAAQQQQQQQEQQQQQQQQQQQQQHQQQLQQAAALH. The segment covering 322–355 has biased composition (low complexity); the sequence is AAQQQQQQQEQQQQQQQQQQQQQHQQQLQQAAAL. Positions 356–369 are enriched in basic residues; sequence HPHHHHSHHGHHGH. The ETS DNA-binding region spans 498 to 579; sequence LQLWQFLVAL…NGERYVYRFV (82 aa). Residues 609–624 show a composition bias toward polar residues; sequence LAKTPPTSGDSQTQSP. The disordered stretch occupies residues 609-628; the sequence is LAKTPPTSGDSQTQSPRVAK.

It belongs to the ETS family. In the adult brain, expressed almost exclusively in dopaminergic neurons.

The protein localises to the nucleus. Functionally, required in dopaminergic neurons to regulate expression of genes involved in dopamine signaling. Decreases expression of the dopamine transporter DAT and increases expression of the dopamine transporter Vmat and the tyrosine 3-monooxygenase ple which is involved in dopamine biosynthesis. Also involved in negatively regulating the expression of a group of endoplasmic reticulum proteins, the molecular chaperone Calr and the protein disulfide isomerases CaBP1 and ERp60. The sequence is that of ETV5-related protein Ets96B from Drosophila melanogaster (Fruit fly).